A 141-amino-acid chain; its full sequence is Hemoglobin subunit alpha (141 aa).

Residues 1–141 (VLSPADKTNV…VSTVLTSKYR (141 aa)) enclose the Globin domain. Serine 3 carries the post-translational modification Phosphoserine. The residue at position 7 (lysine 7) is an N6-succinyllysine. At threonine 8 the chain carries Phosphothreonine. Lysine 11 is modified (N6-succinyllysine). An N6-acetyllysine; alternate modification is found at lysine 16. Position 16 is an N6-succinyllysine; alternate (lysine 16). The residue at position 24 (tyrosine 24) is a Phosphotyrosine. At serine 35 the chain carries Phosphoserine. At lysine 40 the chain carries N6-succinyllysine. A Phosphoserine modification is found at serine 49. Histidine 58 serves as a coordination point for O2. Histidine 87 serves as a coordination point for heme b. Serine 102 carries the phosphoserine modification. Position 108 is a phosphothreonine (threonine 108). Phosphoserine occurs at positions 124 and 131. Phosphothreonine occurs at positions 134 and 137. Serine 138 carries the phosphoserine modification.

This sequence belongs to the globin family. In terms of assembly, heterotetramer of two alpha chains and two beta chains. Red blood cells.

Involved in oxygen transport from the lung to the various peripheral tissues. Functionally, hemopressin acts as an antagonist peptide of the cannabinoid receptor CNR1. Hemopressin-binding efficiently blocks cannabinoid receptor CNR1 and subsequent signaling. The chain is Hemoglobin subunit alpha (HBA) from Urocitellus parryii (Arctic ground squirrel).